The sequence spans 415 residues: JmjC domain-containing protein C (415 aa).

The tract at residues 97-140 (NEKNNQSNNNNNNNNNNNNNNNNNNNNNNNNNNNNNNNNNNKPK) is disordered. A compositionally biased stretch (low complexity) spans 104–137 (NNNNNNNNNNNNNNNNNNNNNNNNNNNNNNNNNN). Residues 127–302 (NNNNNNNNNN…ELLKSNKLWC (176 aa)) form the JmjC domain.

The protein is JmjC domain-containing protein C (jcdC) of Dictyostelium discoideum (Social amoeba).